The sequence spans 81 residues: Cytotoxin 2 (81 aa).

The N-terminal stretch at 1–21 (MKTLLLTLVVVTIVCLDLGYT) is a signal peptide. 4 disulfide bridges follow: C24-C42, C35-C59, C63-C74, and C75-C80.

This sequence belongs to the three-finger toxin family. Short-chain subfamily. Type IA cytotoxin sub-subfamily. As to quaternary structure, monomer in solution; Homodimer and oligomer in the presence of negatively charged lipids forming a pore with a size ranging between 20 and 30 Angstroms. As to expression, expressed by the venom gland.

Its subcellular location is the secreted. It is found in the target cell membrane. In terms of biological role, shows cytolytic activity on many different cells by forming pore in lipid membranes. In vivo, increases heart rate or kills the animal by cardiac arrest. In addition, it binds to heparin with high affinity, interacts with Kv channel-interacting protein 1 (KCNIP1) in a calcium-independent manner, and binds to integrin alpha-V/beta-3 (ITGAV/ITGB3) with moderate affinity. This chain is Cytotoxin 2, found in Naja kaouthia (Monocled cobra).